The chain runs to 394 residues: NAD(P)H-quinone oxidoreductase subunit H (394 aa).

Belongs to the complex I 49 kDa subunit family. In terms of assembly, NDH-1 can be composed of about 15 different subunits; different subcomplexes with different compositions have been identified which probably have different functions.

It localises to the cellular thylakoid membrane. The catalysed reaction is a plastoquinone + NADH + (n+1) H(+)(in) = a plastoquinol + NAD(+) + n H(+)(out). The enzyme catalyses a plastoquinone + NADPH + (n+1) H(+)(in) = a plastoquinol + NADP(+) + n H(+)(out). In terms of biological role, NDH-1 shuttles electrons from an unknown electron donor, via FMN and iron-sulfur (Fe-S) centers, to quinones in the respiratory and/or the photosynthetic chain. The immediate electron acceptor for the enzyme in this species is believed to be plastoquinone. Couples the redox reaction to proton translocation, and thus conserves the redox energy in a proton gradient. Cyanobacterial NDH-1 also plays a role in inorganic carbon-concentration. The sequence is that of NAD(P)H-quinone oxidoreductase subunit H from Synechococcus sp. (strain CC9311).